The sequence spans 205 residues: Small ribosomal subunit protein uS4 (205 aa).

Residues 19–45 (IWGRPKSPVNRREYGPGQHGQRRKGKL) form a disordered region. In terms of domain architecture, S4 RNA-binding spans 94–157 (RRLDAVVYRA…KQLAFVLEAS (64 aa)).

Part of the 30S ribosomal subunit. Contacts protein S5. The interaction surface between S4 and S5 is involved in control of translational fidelity. Post-translationally, may be methylated on an undetermined residue.

Its function is as follows. One of the primary rRNA binding proteins, it binds directly to 16S rRNA where it nucleates assembly of the body of the 30S subunit. With S5 and S12 plays an important role in translational accuracy. In Rhodopseudomonas palustris (strain ATCC BAA-98 / CGA009), this protein is Small ribosomal subunit protein uS4.